Consider the following 535-residue polypeptide: Peptide chain release factor 3 (535 aa).

The tr-type G domain occupies 8-278 (ARRRTFAIIS…VDQAPAPGPR (271 aa)). GTP-binding positions include 17-24 (SHPDAGKT), 85-89 (DTPGH), and 139-142 (NKLD).

It belongs to the TRAFAC class translation factor GTPase superfamily. Classic translation factor GTPase family. PrfC subfamily.

Its subcellular location is the cytoplasm. Increases the formation of ribosomal termination complexes and stimulates activities of RF-1 and RF-2. It binds guanine nucleotides and has strong preference for UGA stop codons. It may interact directly with the ribosome. The stimulation of RF-1 and RF-2 is significantly reduced by GTP and GDP, but not by GMP. The polypeptide is Peptide chain release factor 3 (Bordetella parapertussis (strain 12822 / ATCC BAA-587 / NCTC 13253)).